The chain runs to 317 residues: MPTEQVTLTEEMIGWRLDRALASLITRLSRERLKNLISSGCVSNSQGALVRDPAFKIKSLDCFTVDIPLPRPAHNEPQDIPLEIVFEDEHLLVVNKPAGMVVHPAAGNYDNTLVNALLYHCAGKLSGIGGVARPGIVHRIDKDTSGLLVVAKTDPAHAGLAAQFADHSINRRYRAIVDGHPSLQGHVDAPLARSSVNRQKMAIVSDGRGKRAVTHYRMITPLKNASLIECRLETGRTHQVRVHMSSIGHSLLGDPVYGRSKKAHHALLQSLAFQRQALHAAHLGFIHPISGKQVDFDAEMPQDMQLLFKMLMISNRN.

Positions 15–89 (WRLDRALASL…IPLEIVFEDE (75 aa)) constitute an S4 RNA-binding domain. Asp141 is a catalytic residue.

It belongs to the pseudouridine synthase RluA family.

Its subcellular location is the cytoplasm. The catalysed reaction is uridine(1911/1915/1917) in 23S rRNA = pseudouridine(1911/1915/1917) in 23S rRNA. In terms of biological role, responsible for synthesis of pseudouridine from uracil at positions 1911, 1915 and 1917 in 23S ribosomal RNA. In Zymomonas mobilis subsp. mobilis (strain ATCC 31821 / ZM4 / CP4), this protein is Ribosomal large subunit pseudouridine synthase D.